The sequence spans 332 residues: Beta-ketoacyl-[acyl-carrier-protein] synthase III (332 aa).

Residues C116 and H257 contribute to the active site. Positions 258–262 (QANQR) are ACP-binding. Residue N287 is part of the active site.

Belongs to the thiolase-like superfamily. FabH family. Homodimer.

The protein resides in the cytoplasm. The enzyme catalyses malonyl-[ACP] + acetyl-CoA + H(+) = 3-oxobutanoyl-[ACP] + CO2 + CoA. It functions in the pathway lipid metabolism; fatty acid biosynthesis. Catalyzes the condensation reaction of fatty acid synthesis by the addition to an acyl acceptor of two carbons from malonyl-ACP. Catalyzes the first condensation reaction which initiates fatty acid synthesis and may therefore play a role in governing the total rate of fatty acid production. Possesses both acetoacetyl-ACP synthase and acetyl transacylase activities. Its substrate specificity determines the biosynthesis of branched-chain and/or straight-chain of fatty acids. In Acaryochloris marina (strain MBIC 11017), this protein is Beta-ketoacyl-[acyl-carrier-protein] synthase III.